Consider the following 261-residue polypeptide: Segregation and condensation protein A (261 aa).

This sequence belongs to the ScpA family. Component of a cohesin-like complex composed of ScpA, ScpB and the Smc homodimer, in which ScpA and ScpB bind to the head domain of Smc. The presence of the three proteins is required for the association of the complex with DNA.

It localises to the cytoplasm. Participates in chromosomal partition during cell division. May act via the formation of a condensin-like complex containing Smc and ScpB that pull DNA away from mid-cell into both cell halves. The sequence is that of Segregation and condensation protein A from Desulfitobacterium hafniense (strain DSM 10664 / DCB-2).